The following is a 128-amino-acid chain: Sulfurtransferase TusD (128 aa).

Residue Cys78 is the Cysteine persulfide intermediate of the active site.

It belongs to the DsrE/TusD family. As to quaternary structure, heterohexamer, formed by a dimer of trimers. The hexameric TusBCD complex contains 2 copies each of TusB, TusC and TusD. The TusBCD complex interacts with TusE.

The protein resides in the cytoplasm. Part of a sulfur-relay system required for 2-thiolation of 5-methylaminomethyl-2-thiouridine (mnm(5)s(2)U) at tRNA wobble positions. Accepts sulfur from TusA and transfers it in turn to TusE. The polypeptide is Sulfurtransferase TusD (Erwinia tasmaniensis (strain DSM 17950 / CFBP 7177 / CIP 109463 / NCPPB 4357 / Et1/99)).